The primary structure comprises 185 residues: Elongation factor P (185 aa).

Belongs to the elongation factor P family.

Its subcellular location is the cytoplasm. Its pathway is protein biosynthesis; polypeptide chain elongation. Its function is as follows. Involved in peptide bond synthesis. Stimulates efficient translation and peptide-bond synthesis on native or reconstituted 70S ribosomes in vitro. Probably functions indirectly by altering the affinity of the ribosome for aminoacyl-tRNA, thus increasing their reactivity as acceptors for peptidyl transferase. The sequence is that of Elongation factor P from Streptococcus pyogenes serotype M4 (strain MGAS10750).